Here is a 266-residue protein sequence, read N- to C-terminus: MTAISDCFAALRSQGRCALIPFLTAGDPDLETTRQALLALDREGADLIELGVPYSDPLADGPVIQAAATRALQAGTRLDDVLALLKDVRSQIKAPIVLFTYCNPILNRGFEAFLDQIAAAGANGLVVPDLPLEESQRLSEVAAERGIDLILLIAPTSSADRIAAISKQARGFIYLVSVTGVTGMRQGMQSRVADLLQEIRQGTDKPIGVGFGISGAEQARQVRDWGADGVIVGSAFVNRLQEQGVEGVATLCRELRQAIDRQPVLS.

Residues Glu49 and Asp60 each act as proton acceptor in the active site.

The protein belongs to the TrpA family. In terms of assembly, tetramer of two alpha and two beta chains.

The catalysed reaction is (1S,2R)-1-C-(indol-3-yl)glycerol 3-phosphate + L-serine = D-glyceraldehyde 3-phosphate + L-tryptophan + H2O. It functions in the pathway amino-acid biosynthesis; L-tryptophan biosynthesis; L-tryptophan from chorismate: step 5/5. In terms of biological role, the alpha subunit is responsible for the aldol cleavage of indoleglycerol phosphate to indole and glyceraldehyde 3-phosphate. This chain is Tryptophan synthase alpha chain, found in Synechococcus elongatus (strain ATCC 33912 / PCC 7942 / FACHB-805) (Anacystis nidulans R2).